A 75-amino-acid polypeptide reads, in one-letter code: Small ribosomal subunit protein eS31 (75 aa).

Zn(2+) contacts are provided by Cys41, Cys44, Cys60, and Cys63. The C4-type zinc finger occupies 41 to 63 (CPRCGSIMAHHLKPNERWSCGKC).

It belongs to the eukaryotic ribosomal protein eS31 family. As to quaternary structure, part of the 30S ribosomal subunit. Zn(2+) serves as cofactor.

The polypeptide is Small ribosomal subunit protein eS31 (Saccharolobus solfataricus (strain ATCC 35092 / DSM 1617 / JCM 11322 / P2) (Sulfolobus solfataricus)).